The following is a 279-amino-acid chain: Protease HtpX homolog (279 aa).

Helical transmembrane passes span 4 to 24 (IFLF…VLAV) and 34 to 54 (GSLL…SLLM). H140 contacts Zn(2+). E141 is a catalytic residue. A Zn(2+)-binding site is contributed by H144. The next 2 membrane-spanning stretches (helical) occupy residues 155–175 (LIQG…ANLI) and 189–209 (FLVS…IVMW). E215 lines the Zn(2+) pocket.

This sequence belongs to the peptidase M48B family. Zn(2+) serves as cofactor.

The protein resides in the cell inner membrane. The protein is Protease HtpX homolog of Neisseria meningitidis serogroup B (strain ATCC BAA-335 / MC58).